Here is an 86-residue protein sequence, read N- to C-terminus: UPF0367 protein NATL1_01981 (86 aa).

The protein belongs to the UPF0367 family.

This is UPF0367 protein NATL1_01981 from Prochlorococcus marinus (strain NATL1A).